Consider the following 503-residue polypeptide: Probable cytosol aminopeptidase (503 aa).

The Mn(2+) site is built by lysine 274 and aspartate 279. The active site involves lysine 286. Positions 297, 356, and 358 each coordinate Mn(2+). The active site involves arginine 360.

This sequence belongs to the peptidase M17 family. Mn(2+) serves as cofactor.

Its subcellular location is the cytoplasm. The enzyme catalyses Release of an N-terminal amino acid, Xaa-|-Yaa-, in which Xaa is preferably Leu, but may be other amino acids including Pro although not Arg or Lys, and Yaa may be Pro. Amino acid amides and methyl esters are also readily hydrolyzed, but rates on arylamides are exceedingly low.. It catalyses the reaction Release of an N-terminal amino acid, preferentially leucine, but not glutamic or aspartic acids.. Functionally, presumably involved in the processing and regular turnover of intracellular proteins. Catalyzes the removal of unsubstituted N-terminal amino acids from various peptides. The chain is Probable cytosol aminopeptidase from Paraburkholderia phymatum (strain DSM 17167 / CIP 108236 / LMG 21445 / STM815) (Burkholderia phymatum).